Reading from the N-terminus, the 401-residue chain is Enolase (401 aa).

Residue Q154 participates in (2R)-2-phosphoglycerate binding. The active-site Proton donor is the E196. Mg(2+)-binding residues include D232, E275, and D302. Residues K327, R356, S357, and K378 each contribute to the (2R)-2-phosphoglycerate site. Catalysis depends on K327, which acts as the Proton acceptor.

It belongs to the enolase family. Requires Mg(2+) as cofactor.

The protein localises to the cytoplasm. The protein resides in the secreted. It is found in the cell surface. It carries out the reaction (2R)-2-phosphoglycerate = phosphoenolpyruvate + H2O. It functions in the pathway carbohydrate degradation; glycolysis; pyruvate from D-glyceraldehyde 3-phosphate: step 4/5. In terms of biological role, catalyzes the reversible conversion of 2-phosphoglycerate (2-PG) into phosphoenolpyruvate (PEP). It is essential for the degradation of carbohydrates via glycolysis. This chain is Enolase, found in Haloarcula marismortui (strain ATCC 43049 / DSM 3752 / JCM 8966 / VKM B-1809) (Halobacterium marismortui).